A 551-amino-acid chain; its full sequence is HTH-type transcriptional regulator SgrR (551 aa).

The HTH marR-type domain occupies methionine 1 to arginine 116. A DNA-binding region (H-T-H motif) is located at residues leucine 26–aspartate 49. The solute-binding stretch occupies residues glutamate 163 to tryptophan 492.

Functionally, activates the small RNA gene sgrS under glucose-phosphate stress conditions as well as yfdZ. Represses its own transcription under both stress and non-stress conditions. Might act as a sensor of the intracellular accumulation of phosphoglucose by binding these molecules in its C-terminal solute-binding domain. The protein is HTH-type transcriptional regulator SgrR of Shigella flexneri serotype 5b (strain 8401).